Reading from the N-terminus, the 332-residue chain is Ectoine dioxygenase (332 aa).

The span at 1 to 10 shows a compositional bias: polar residues; it reads MSVQTSSNRP. Positions 1-47 are disordered; that stretch reads MSVQTSSNRPLPQANLHIATETPEADSRIRSAPRPGQDPYPTRLSEP. Residue glutamine 163 participates in L-ectoine binding. Position 169 (lysine 169) interacts with 2-oxoglutarate. Residues histidine 180, aspartate 182, and histidine 281 each contribute to the Fe cation site.

The protein belongs to the PhyH family. EctD subfamily. In terms of assembly, homodimer. Fe(2+) is required as a cofactor.

The catalysed reaction is L-ectoine + 2-oxoglutarate + O2 = 5-hydroxyectoine + succinate + CO2. Functionally, involved in the biosynthesis of 5-hydroxyectoine, called compatible solute, which helps organisms to survive extreme osmotic stress by acting as a highly soluble organic osmolyte. Catalyzes the 2-oxoglutarate-dependent selective hydroxylation of L-ectoine to yield (4S,5S)-5-hydroxyectoine. This chain is Ectoine dioxygenase, found in Halomonas elongata (strain ATCC 33173 / DSM 2581 / NBRC 15536 / NCIMB 2198 / 1H9).